Here is a 422-residue protein sequence, read N- to C-terminus: UDP-N-acetylglucosamine 1-carboxyvinyltransferase (422 aa).

K22–N23 contributes to the phosphoenolpyruvate binding site. R93 is a binding site for UDP-N-acetyl-alpha-D-glucosamine. C117 acts as the Proton donor in catalysis. At C117 the chain carries 2-(S-cysteinyl)pyruvic acid O-phosphothioketal. UDP-N-acetyl-alpha-D-glucosamine contacts are provided by residues R122 to L126, D308, and L330.

Belongs to the EPSP synthase family. MurA subfamily.

The protein localises to the cytoplasm. The enzyme catalyses phosphoenolpyruvate + UDP-N-acetyl-alpha-D-glucosamine = UDP-N-acetyl-3-O-(1-carboxyvinyl)-alpha-D-glucosamine + phosphate. It participates in cell wall biogenesis; peptidoglycan biosynthesis. Functionally, cell wall formation. Adds enolpyruvyl to UDP-N-acetylglucosamine. The chain is UDP-N-acetylglucosamine 1-carboxyvinyltransferase from Helicobacter pylori (strain ATCC 700392 / 26695) (Campylobacter pylori).